The following is a 1218-amino-acid chain: NACHT, LRR and PYD domains-containing protein 1a allele 4 (1218 aa).

Over residues 1–29 the composition is skewed to polar residues; the sequence is MGESQSKQESNTRVAQHGSQQDVDPTFQT. Disordered stretches follow at residues 1–44 and 71–91; these read MGES…QVEQ and EMDH…DRSE. Basic residues predominate over residues 77-87; that stretch reads RRHSHQSKKKL. The 310-residue stretch at 175 to 484 folds into the NACHT domain; that stretch reads QLVIIEGAAG…EFFAAMSYIL (310 aa). 181-188 lines the ATP pocket; sequence GAAGIGKS. LRR repeat units follow at residues 343 to 364, 673 to 693, and 730 to 750; these read KERN…LTLC, NLEE…RSLC, and RLAE…RQLC. Residues 799-815 show a composition bias toward polar residues; it reads TMPTENTDGEESLTSSK. Residues 799–842 are disordered; the sequence is TMPTENTDGEESLTSSKQQQQQSGDKHMEPLGTDDDFWGPSGPV. Positions 835–968 are ZU5; it reads FWGPSGPVST…HFAVLENPSF (134 aa). Residues 835-1118 enclose the FIIND domain; it reads FWGPSGPVST…LRPALPRMAS (284 aa). Residues 969-1118 form a UPA region; that stretch reads SPMGVLLRMI…LRPALPRMAS (150 aa). In terms of domain architecture, CARD spans 1122-1211; sequence DAPALLHFVD…HLIMDLLEKS (90 aa).

The protein belongs to the NLRP family. In terms of assembly, interacts (via LRR repeats) with BCL2 and BCL2L1 (via the loop between motifs BH4 and BH3). Interacts with NOD2; this interaction is enhanced in the presence of muramyl dipeptide (MDP) and increases IL1B release. Interacts with EIF2AK2/PKR; this interaction requires EIF2AK2 activity, is accompanied by EIF2AK2 autophosphorylation and promotes inflammasome assembly in response to danger-associated signals. Interacts with MEFV; this interaction targets Nlrp1a to degradation by autophagy, hence preventing excessive IL1B- and IL18-mediated inflammation. Interacts with DPP9; leading to inhibit activation of the inflammasome. DPP9 acts via formation of a ternary complex, composed of a DPP9 homodimer, one full-length NLRP1 protein, and one cleaved C-terminus of Nlrp1a (NACHT, LRR and PYD domains-containing protein 1a, C-terminus). Interacts with DPP8; leading to inhibit activation of the inflammasome, probably via formation of a ternary complex with DPP8. As to quaternary structure, interacts with the C-terminal part of Nlrp1a (NACHT, LRR and PYD domains-containing protein 1a, C-terminus) in absence of pathogens and other damage-associated signals. Interacts with the N-terminal part of Nlrp1a (NACHT, LRR and PYD domains-containing protein 1a, N-terminus) in absence of pathogens and other damage-associated signals. Homomultimer; forms the Nlrp1a inflammasome polymeric complex, a filament composed of homopolymers of this form in response to pathogens and other damage-associated signals. The Nlrp1a inflammasome polymeric complex directly recruits pro-caspase-1 (proCASP1) independently of PYCARD/ASC. Interacts (via CARD domain) with CASP1 (via CARD domain); leading to CASP1 activation. Autocatalytically cleaved. Autocatalytic cleavage in FIIND region occurs constitutively, prior to activation signals, and is required for inflammasome activity (IL1B release), possibly by facilitating CASP1 binding. Both N- and C-terminal parts remain associated non-covalently. In terms of processing, ubiquitinated in response to pathogen-associated signals, leading to its degradation by the proteasome and subsequent release of the cleaved C-terminal part of the protein (NACHT, LRR and PYD domains-containing protein 1a, C-terminus), which polymerizes and forms the Nlrp1a inflammasome.

It localises to the cytoplasm. The protein resides in the cytosol. Its subcellular location is the nucleus. It is found in the inflammasome. Its activity is regulated as follows. Activated by pathogens and other damage-associated signals: activation promotes ubiquitination and degradation of the N-terminal part, releasing the cleaved C-terminal part of the protein (NACHT, LRR and PYD domains-containing protein 1a, C-terminus), which polymerizes and forms the Nlrp1a inflammasome. Nlrp1a inflammasome is inhibited by DPP8 and DPP9, which sequester the C-terminal fragment of Nlrp1a (NACHT, LRR and PYD domains-containing protein 1a, C-terminus) in a ternary complex, thereby preventing Nlrp1a oligomerization and activation. Nlrp1a inflammasome is strongly activated by Val-boroPro (Talabostat, PT-100), an inhibitor of dipeptidyl peptidases DPP8 and DPP9. Val-boroPro relieves inhibition of DPP8 and/or DPP9 by promoting disruption of the ternary complex, releasing its C-terminal part from autoinhibition. Not activated by cleavage by B.anthracis lethal toxin (LT) endopeptidase. In terms of biological role, acts as the sensor component of the Nlrp1a inflammasome, which mediates inflammasome activation in response to various pathogen-associated signals, leading to subsequent pyroptosis. Inflammasomes are supramolecular complexes that assemble in the cytosol in response to pathogens and other damage-associated signals and play critical roles in innate immunity and inflammation. Acts as a recognition receptor (PRR): recognizes specific pathogens and other damage-associated signals, such as Val-boroPro inhibitor, and mediates the formation of the inflammasome polymeric complex. In response to pathogen-associated signals, the N-terminal part of Nlrp1a is degraded by the proteasome, releasing the cleaved C-terminal part of the protein (NACHT, LRR and PYD domains-containing protein 1a, C-terminus), which polymerizes to initiate the formation of the inflammasome complex: the inflammasome directly recruits pro-caspase-1 (proCASP1) independently of PYCARD/ASC and promotes caspase-1 (CASP1) activation, which subsequently cleaves and activates inflammatory cytokines IL1B and IL18 and gasdermin-D (GSDMD), leading to pyroptosis. In the absence of GSDMD expression, the Nlrp1a inflammasome is able to recruit and activate CASP8, leading to activation of gasdermin-E (GSDME). Functionally, constitutes the precursor of the Nlrp1a inflammasome, which mediates autoproteolytic processing within the FIIND domain to generate the N-terminal and C-terminal parts, which are associated non-covalently in absence of pathogens and other damage-associated signals. Regulatory part that prevents formation of the Nlrp1a inflammasome: in absence of pathogens and other damage-associated signals, interacts with the C-terminal part of Nlrp1a (NACHT, LRR and PYD domains-containing protein 1a, C-terminus), preventing activation of the Nlrp1a inflammasome. In response to pathogen-associated signals, this part is ubiquitinated by the N-end rule pathway and degraded by the proteasome, releasing the cleaved C-terminal part of the protein, which polymerizes and forms the Nlrp1a inflammasome. Its function is as follows. Constitutes the active part of the Nlrp1a inflammasome. In absence of pathogens and other damage-associated signals, interacts with the N-terminal part of Nlrp1a (NACHT, LRR and PYD domains-containing protein 1a, N-terminus), preventing activation of the Nlrp1a inflammasome. In response to pathogen-associated signals, the N-terminal part of Nlrp1a is degraded by the proteasome, releasing this form, which polymerizes to form the Nlrp1a inflammasome complex: the Nlrp1a inflammasome complex then directly recruits pro-caspase-1 (proCASP1) and promotes caspase-1 (CASP1) activation, leading to gasdermin-D (GSDMD) cleavage and subsequent pyroptosis. In Rattus norvegicus (Rat), this protein is NACHT, LRR and PYD domains-containing protein 1a allele 4.